The chain runs to 283 residues: Protein/nucleic acid deglycase HchA (283 aa).

Residues His86, Glu91, and His123 each coordinate Zn(2+). The active-site Nucleophile is the Cys185.

The protein belongs to the peptidase C56 family. HchA subfamily. As to quaternary structure, homodimer.

The protein localises to the cytoplasm. The enzyme catalyses N(omega)-(1-hydroxy-2-oxopropyl)-L-arginyl-[protein] + H2O = lactate + L-arginyl-[protein] + H(+). The catalysed reaction is N(6)-(1-hydroxy-2-oxopropyl)-L-lysyl-[protein] + H2O = lactate + L-lysyl-[protein] + H(+). It catalyses the reaction S-(1-hydroxy-2-oxopropyl)-L-cysteinyl-[protein] + H2O = lactate + L-cysteinyl-[protein] + H(+). It carries out the reaction N(omega)-(1-hydroxy-2-oxoethyl)-L-arginyl-[protein] + H2O = L-arginyl-[protein] + glycolate + H(+). The enzyme catalyses N(6)-(1-hydroxy-2-oxoethyl)-L-lysyl-[protein] + H2O = glycolate + L-lysyl-[protein] + H(+). The catalysed reaction is S-(1-hydroxy-2-oxoethyl)-L-cysteinyl-[protein] + H2O = glycolate + L-cysteinyl-[protein] + H(+). It catalyses the reaction N(2)-(1-hydroxy-2-oxopropyl)-dGTP + H2O = lactate + dGTP + H(+). It carries out the reaction N(2)-(1-hydroxy-2-oxopropyl)-GTP + H2O = lactate + GTP + H(+). The enzyme catalyses N(2)-(1-hydroxy-2-oxopropyl)-GDP + H2O = lactate + GDP + H(+). The catalysed reaction is N(2)-(1-hydroxy-2-oxopropyl)-GMP + H2O = lactate + GMP + H(+). It catalyses the reaction N(2)-(1-hydroxy-2-oxoethyl)-dGTP + H2O = dGTP + glycolate + H(+). It carries out the reaction N(2)-(1-hydroxy-2-oxoethyl)-GTP + H2O = glycolate + GTP + H(+). The enzyme catalyses N(2)-(1-hydroxy-2-oxoethyl)-GDP + H2O = glycolate + GDP + H(+). The catalysed reaction is N(2)-(1-hydroxy-2-oxoethyl)-GMP + H2O = glycolate + GMP + H(+). It catalyses the reaction an N(2)-(1-hydroxy-2-oxopropyl)-guanosine in RNA + H2O = a guanosine in RNA + lactate + H(+). It carries out the reaction an N(2)-(1-hydroxy-2-oxopropyl)-2'-deoxyguanosine in DNA + H2O = a 2'-deoxyguanosine in DNA + lactate + H(+). The enzyme catalyses an N(2)-(1-hydroxy-2-oxoethyl)-guanosine in RNA + H2O = a guanosine in RNA + glycolate + H(+). The catalysed reaction is an N(2)-(1-hydroxy-2-oxoethyl)-2'-deoxyguanosine in DNA + H2O = a 2'-deoxyguanosine in DNA + glycolate + H(+). Functionally, protein and nucleotide deglycase that catalyzes the deglycation of the Maillard adducts formed between amino groups of proteins or nucleotides and reactive carbonyl groups of glyoxals. Thus, functions as a protein deglycase that repairs methylglyoxal- and glyoxal-glycated proteins, and releases repaired proteins and lactate or glycolate, respectively. Deglycates cysteine, arginine and lysine residues in proteins, and thus reactivates these proteins by reversing glycation by glyoxals. Acts on early glycation intermediates (hemithioacetals and aminocarbinols), preventing the formation of Schiff bases and advanced glycation endproducts (AGE). Also functions as a nucleotide deglycase able to repair glycated guanine in the free nucleotide pool (GTP, GDP, GMP, dGTP) and in DNA and RNA. Is thus involved in a major nucleotide repair system named guanine glycation repair (GG repair), dedicated to reversing methylglyoxal and glyoxal damage via nucleotide sanitization and direct nucleic acid repair. Plays an important role in protecting cells from carbonyl stress. This Escherichia coli O81 (strain ED1a) protein is Protein/nucleic acid deglycase HchA.